Here is a 333-residue protein sequence, read N- to C-terminus: MALAVADTQNETFARSESPTSGPSDQLSTHDLDRHIEKLMRCELIAEQDVKTLCAKAREILAEEGNVQVIDSPVTICGDIHGQFYDLMELFRVGGPVPNTNYLFLGDFVDRGFYSVETFLLLLALKARYPDRMMLIRGNHESRQITQVYGFYDECMRKYGNASVWKHCTEVFDYLALAAVIDGKVFCVHGGLSPSISTMDQIRVIDRKQEVPHDGPMCDLLWSDPEEGNVGWGLSPRGAGYLFGADASKTFCEANSVDLICRAHQLVMEGYKWHFNEKVLTVWSAPNYCYRCGNVAAILELDENLNREFTIFEAAPQENRGAPAKKPHADYFL.

Positions 1-29 are disordered; that stretch reads MALAVADTQNETFARSESPTSGPSDQLST. A compositionally biased stretch (polar residues) spans 7 to 27; sequence DTQNETFARSESPTSGPSDQL. Residues D79, H81, D107, and N139 each coordinate Mn(2+). Residue H140 is the Proton donor of the active site. Mn(2+) is bound by residues H189 and H264. L333 carries the post-translational modification Leucine methyl ester.

Belongs to the PPP phosphatase family. PP-4 (PP-X) subfamily. In terms of assembly, serine/threonine-protein phosphatase 4 (PP4) occurs in different assemblies of the catalytic and one or more regulatory subunits. The regulatory subunits are likely to be ppfr-1, ppfr-2, ppfr-4 and smk-1. Interacts with mei-1. The cofactor is Mn(2+). Methylation at the C-terminal Leu-333 is critical for interactions with regulatory subunits.

The protein resides in the cytoplasm. Its subcellular location is the cytoskeleton. The protein localises to the microtubule organizing center. It is found in the centrosome. It carries out the reaction O-phospho-L-seryl-[protein] + H2O = L-seryl-[protein] + phosphate. The enzyme catalyses O-phospho-L-threonyl-[protein] + H2O = L-threonyl-[protein] + phosphate. Its function is as follows. Protein phosphatase which plays an essential role in meiosis and in early embryonic mitosis. During spermatocyte meiosis and the first embryonic mitosis, regulates centrosome maturation, and thus spindle formation, by recruiting some of the components of the pericentriolar material (PCM). During oocyte meiosis I, regulates meiotic chromosome dynamics including synapsis-independent chromosome pairing, restriction of synapsis to homologous chromosomes, programmed DNA double-strand break initiation and crossover formation resulting in chiasma formation. During oocyte meiosis II and probably together with regulatory subunit ppfr-1, may regulate microtubule severing by dephosphorylating and activating mei-1, a component of the katanin microtubule severing complex. In Caenorhabditis briggsae, this protein is Serine/threonine-protein phosphatase 4 catalytic subunit 1 (pph-4.1).